We begin with the raw amino-acid sequence, 53 residues long: Bowman-Birk type proteinase inhibitor 1 (53 aa).

5 cysteine pairs are disulfide-bonded: Cys-9–Cys-24, Cys-12–Cys-51, Cys-14–Cys-22, Cys-31–Cys-38, and Cys-40–Cys-48.

In terms of assembly, dimer.

Functionally, inhibits trypsin (IC(50)=6.20 nM), neutrophil elastase (ELANE) and, to a lesser extent, alpha-chymotrypsin (IC(50)=3.44 uM). This is Bowman-Birk type proteinase inhibitor 1 from Lathyrus sativus (White vetchling).